The sequence spans 637 residues: Penicillin-binding protein 1A (637 aa).

The tract at residues 62–224 is transglycosylase; that stretch reads LIADLGSERR…NQYDPYSHPE (163 aa). Glu91 functions as the Proton donor; for transglycosylase activity in the catalytic mechanism. Residues 298–612 form a transpeptidase region; sequence EVYTNVDSKV…RLTPIVGDGF (315 aa). Catalysis depends on Ser371, which acts as the Acyl-ester intermediate; for transpeptidase activity.

In the N-terminal section; belongs to the glycosyltransferase 51 family. This sequence in the C-terminal section; belongs to the transpeptidase family.

It localises to the secreted. The catalysed reaction is [GlcNAc-(1-&gt;4)-Mur2Ac(oyl-L-Ala-gamma-D-Glu-L-Lys-D-Ala-D-Ala)](n)-di-trans,octa-cis-undecaprenyl diphosphate + beta-D-GlcNAc-(1-&gt;4)-Mur2Ac(oyl-L-Ala-gamma-D-Glu-L-Lys-D-Ala-D-Ala)-di-trans,octa-cis-undecaprenyl diphosphate = [GlcNAc-(1-&gt;4)-Mur2Ac(oyl-L-Ala-gamma-D-Glu-L-Lys-D-Ala-D-Ala)](n+1)-di-trans,octa-cis-undecaprenyl diphosphate + di-trans,octa-cis-undecaprenyl diphosphate + H(+). It carries out the reaction Preferential cleavage: (Ac)2-L-Lys-D-Ala-|-D-Ala. Also transpeptidation of peptidyl-alanyl moieties that are N-acyl substituents of D-alanine.. The protein operates within cell wall biogenesis; peptidoglycan biosynthesis. Functionally, cell wall formation. This Streptococcus oralis protein is Penicillin-binding protein 1A (ponA).